We begin with the raw amino-acid sequence, 352 residues long: Beta-methylmalyl-CoA dehydratase (352 aa).

One can recognise a MaoC-like domain in the interval 16–129; the sequence is LGQTIVHATP…GKTGVVYVHS (114 aa). Substrate-binding positions include 62-65, 85-88, and 96-98; these read PIDS, IANL, and GAV.

Homodimer.

The enzyme catalyses (2R,3S)-beta-methylmalyl-CoA = 2-methylfumaryl-CoA + H2O. Its function is as follows. Involved in the glyoxylate assimilation cycle used to regenerate acetyl-CoA and produce pyruvate as universal precursor for biosynthesis. Catalyzes the reversible dehydration of beta-methylmalyl-CoA ((2R,3S)-beta-methylmalyl-CoA) to yield mesaconyl-CoA (2-methylfumaryl-CoA). This chain is Beta-methylmalyl-CoA dehydratase (mch), found in Chloroflexus aurantiacus (strain ATCC 29366 / DSM 635 / J-10-fl).